The sequence spans 1186 residues: ATP-dependent helicase/deoxyribonuclease subunit B (1186 aa).

The protein belongs to the helicase family. AddB/RexB type 2 subfamily. Heterodimer of AddA and RexB. Mg(2+) serves as cofactor.

Functionally, the heterodimer acts as both an ATP-dependent DNA helicase and an ATP-dependent, dual-direction single-stranded exonuclease. Recognizes the chi site generating a DNA molecule suitable for the initiation of homologous recombination. This subunit has 5' -&gt; 3' nuclease activity but not helicase activity. This is ATP-dependent helicase/deoxyribonuclease subunit B from Latilactobacillus sakei subsp. sakei (strain 23K) (Lactobacillus sakei subsp. sakei).